A 502-amino-acid polypeptide reads, in one-letter code: Pyruvate kinase (502 aa).

R54 is a binding site for substrate. Positions 56, 58, 88, and 89 each coordinate K(+). Position 56–59 (56–59) interacts with ATP; it reads NFSH. The ATP site is built by R95 and K184. Position 252 (E252) interacts with Mg(2+). Substrate is bound by residues G275, D276, and T308. D276 serves as a coordination point for Mg(2+).

It belongs to the pyruvate kinase family. In terms of assembly, homotetramer. Mg(2+) serves as cofactor. It depends on K(+) as a cofactor.

The enzyme catalyses pyruvate + ATP = phosphoenolpyruvate + ADP + H(+). It functions in the pathway carbohydrate degradation; glycolysis; pyruvate from D-glyceraldehyde 3-phosphate: step 5/5. Regulated by phosphoenolpyruvate substrate and is allosterically activated by ribose-5-phosphate, AMP and other nucleoside monophosphates but not by fructose-1,6-bisphosphate. This chain is Pyruvate kinase (pyk), found in Lactococcus lactis subsp. lactis (strain IL1403) (Streptococcus lactis).